Consider the following 400-residue polypeptide: S-adenosylmethionine sensor upstream of mTORC1 (400 aa).

S-adenosyl-L-methionine-binding residues include Arg99, Gly168, Asp186, Asp198, Phe199, and Ser240.

This sequence belongs to the BMT2/SAMTOR family. In terms of assembly, interacts with the GATOR1 complex; interaction is disrupted when samtor binds S-adenosyl-L-methionine. Interacts with the KICSTOR complex; interaction is disrupted when samtor binds S-adenosyl-L-methionine.

Its function is as follows. S-adenosyl-L-methionine-binding protein that acts as an inhibitor of mTORC1 signaling via interaction with the GATOR1 and KICSTOR complexes. Acts as a sensor of S-adenosyl-L-methionine to signal methionine sufficiency to mTORC1: in presence of methionine, binds S-adenosyl-L-methionine, leading to disrupt interaction with the GATOR1 and KICSTOR complexes and promote mTORC1 signaling. Upon methionine starvation, S-adenosyl-L-methionine levels are reduced, thereby promoting the association with GATOR1 and KICSTOR, leading to inhibit mTORC1 signaling. Probably also acts as a S-adenosyl-L-methionine-dependent methyltransferase. This is S-adenosylmethionine sensor upstream of mTORC1 from Xenopus tropicalis (Western clawed frog).